The chain runs to 222 residues: Proteoglycan 3 (222 aa).

The N-terminal stretch at 1–17 is a signal peptide; sequence MKQPLILSFLLLGMVSA. The span at 27–46 shows a compositional bias: basic and acidic residues; the sequence is NPKREESLKQEADGSREQGR. Positions 27 to 100 are disordered; the sequence is NPKREESLKQ…PKEEDTTHFQ (74 aa). Acidic residues predominate over residues 71-81; sequence FEDEEAMESDP. Positions 83-97 are enriched in basic and acidic residues; the sequence is ALNKDSACPKEEDTT. Residues 105 to 221 form the C-type lectin domain; it reads CKSCNYVLVR…CKSHLPFICS (117 aa). 2 cysteine pairs are disulfide-bonded: Cys126/Cys220 and Cys197/Cys212.

Expressed in bone marrow, spleen, and thymus. Not detected in heart, liver or lung.

Its function is as follows. Possesses similar cytotoxic and cytostimulatory activities to PRG2/MBP. The polypeptide is Proteoglycan 3 (Mus musculus (Mouse)).